The following is a 247-amino-acid chain: Adenosylcobinamide-GDP ribazoletransferase (247 aa).

Helical transmembrane passes span 34–54, 59–79, 113–133, 138–158, and 187–207; these read IVMF…IFIL, CGIP…TGGF, GGLA…ELAL, MLAA…LLMY, and LAVI…AMVV.

Belongs to the CobS family. Mg(2+) is required as a cofactor.

It localises to the cell inner membrane. The enzyme catalyses alpha-ribazole + adenosylcob(III)inamide-GDP = adenosylcob(III)alamin + GMP + H(+). It carries out the reaction alpha-ribazole 5'-phosphate + adenosylcob(III)inamide-GDP = adenosylcob(III)alamin 5'-phosphate + GMP + H(+). It participates in cofactor biosynthesis; adenosylcobalamin biosynthesis; adenosylcobalamin from cob(II)yrinate a,c-diamide: step 7/7. Its function is as follows. Joins adenosylcobinamide-GDP and alpha-ribazole to generate adenosylcobalamin (Ado-cobalamin). Also synthesizes adenosylcobalamin 5'-phosphate from adenosylcobinamide-GDP and alpha-ribazole 5'-phosphate. The sequence is that of Adenosylcobinamide-GDP ribazoletransferase from Salmonella choleraesuis (strain SC-B67).